The sequence spans 120 residues: Secreted effector PIT2 (120 aa).

The N-terminal stretch at Met1 to Ala25 is a signal peptide. A PID14 protease inhibitor domain region spans residues Lys46–Leu59.

Interacts with host cysteine proteases CP1A, CP1B, XCP2 and CP2. Cleaved by host target papain-like cysteine proteases (PLCPs) to release the embedded inhibitor peptide PID14.

It localises to the secreted. Its function is as follows. Secreted effector required for virulence. Functions as an inhibitor of a set of apoplastic maize papain-like cysteine proteases (PLCPs) including CP1A, CP1B, XCP2 and CP2, whose activity is directly linked with salicylic-acid-associated plant defenses. Acts as a substrate mimicking molecule for apoplastic PLCPs and its processing releases the embedded inhibitor peptide PID14, which in turn blocks PLCPs to modulate host immunity. The polypeptide is Secreted effector PIT2 (Mycosarcoma maydis (Corn smut fungus)).